Reading from the N-terminus, the 365-residue chain is Cobalt-precorrin-5B C(1)-methyltransferase (365 aa).

Belongs to the CbiD family.

The catalysed reaction is Co-precorrin-5B + S-adenosyl-L-methionine = Co-precorrin-6A + S-adenosyl-L-homocysteine. Its pathway is cofactor biosynthesis; adenosylcobalamin biosynthesis; cob(II)yrinate a,c-diamide from sirohydrochlorin (anaerobic route): step 6/10. In terms of biological role, catalyzes the methylation of C-1 in cobalt-precorrin-5B to form cobalt-precorrin-6A. This chain is Cobalt-precorrin-5B C(1)-methyltransferase, found in Moorella thermoacetica (strain ATCC 39073 / JCM 9320).